The primary structure comprises 1146 residues: Myosin heavy chain kinase A (1146 aa).

The interval 1–25 (MFNIKKRKESITGIPPINVNSPQSV) is disordered. Residues 100 to 120 (EQMEDQLEKTMKVVRNHTDSL) adopt a coiled-coil conformation. Residues 158-191 (IQEKKSTSSPLVKGGISGGGGSGGDDSFDGANIS) form a disordered region. Gly residues predominate over residues 172-181 (GISGGGGSGG). 2 coiled-coil regions span residues 187–241 (GANI…KRIE) and 297–502 (SKIE…ASIS). The interval 500 to 551 (SISPISSVPKSPITTKRSSIILNSPPMTSQQSSPKIQDLLSSSGSSSVSGIN) is pseudosubstrate/autoinhibitory domain. Polar residues predominate over residues 521–534 (LNSPPMTSQQSSPK). The tract at residues 521–540 (LNSPPMTSQQSSPKIQDLLS) is disordered. Residues 552–852 (ISSETGEMGI…KVGAKQLPKA (301 aa)) are catalytic. One can recognise an Alpha-type protein kinase domain in the interval 564–808 (EFDPIINKWI…VCALLDLDVK (245 aa)). 778 to 783 (GLGNLG) lines the ATP pocket. 7 WD repeats span residues 867–897 (SFRERVNSIAFFDNQKLLCAGYGDGTYRVFD), 910–938 (GHRKSIESIACNSNYIFTSSPDNTIKVHI), 952–980 (GHTGEVNCVVANEKYLFSCSYDKTIKVWD), 993–1021 (VHTKYIKTLALSGRYLFSGGNDQIIYVWD), 1033–1061 (GHEDWVLSLHCTASYLFSTSKDNVIKIWD), 1073–1101 (GHWNSVSSCVVKDRYLYSGSEDNSIKVWD), and 1114–1142 (SHSLGVKCLMVFNNQIISAAFDGSIKVWE).

This sequence belongs to the protein kinase superfamily. Alpha-type protein kinase family. ALPK subfamily. Oligomer. Mg(2+) serves as cofactor. Requires Mn(2+) as cofactor. In terms of processing, the N-terminus is blocked.

It catalyses the reaction L-threonyl-[myosin heavy-chain] + ATP = O-phospho-L-threonyl-[myosin heavy-chain] + ADP + H(+). In terms of biological role, catalyzes its autophosphorylation, which is needed for enzymatic activity and phosphorylates myosin II heavy chain at a threonine in the C-terminal tail region. This phosphorylation is critical for regulating the assembly and disassembly of myosin II filament, affecting myosin localization during an array of cellular contractile events, including cytokinesis and capping of cell surface receptors as well as chemotactic cell locomotion. The polypeptide is Myosin heavy chain kinase A (mhkA) (Dictyostelium discoideum (Social amoeba)).